We begin with the raw amino-acid sequence, 29 residues long: uncharacterized protein (29 aa).

It is found in the plastid. The protein resides in the chloroplast. This is an uncharacterized protein from Trieres chinensis (Marine centric diatom).